The chain runs to 319 residues: Acetyl-coenzyme A carboxylase carboxyl transferase subunit alpha (319 aa).

One can recognise a CoA carboxyltransferase C-terminal domain in the interval 35-296 (NLDEEVQRLR…KAQLLADLSD (262 aa)).

Belongs to the AccA family. In terms of assembly, acetyl-CoA carboxylase is a heterohexamer composed of biotin carboxyl carrier protein (AccB), biotin carboxylase (AccC) and two subunits each of ACCase subunit alpha (AccA) and ACCase subunit beta (AccD).

Its subcellular location is the cytoplasm. The catalysed reaction is N(6)-carboxybiotinyl-L-lysyl-[protein] + acetyl-CoA = N(6)-biotinyl-L-lysyl-[protein] + malonyl-CoA. It participates in lipid metabolism; malonyl-CoA biosynthesis; malonyl-CoA from acetyl-CoA: step 1/1. Its function is as follows. Component of the acetyl coenzyme A carboxylase (ACC) complex. First, biotin carboxylase catalyzes the carboxylation of biotin on its carrier protein (BCCP) and then the CO(2) group is transferred by the carboxyltransferase to acetyl-CoA to form malonyl-CoA. This Yersinia enterocolitica serotype O:8 / biotype 1B (strain NCTC 13174 / 8081) protein is Acetyl-coenzyme A carboxylase carboxyl transferase subunit alpha.